A 430-amino-acid chain; its full sequence is Adenylosuccinate synthetase (430 aa).

GTP contacts are provided by residues 12-18 (GDEGKGK) and 40-42 (GHT). Residue aspartate 13 is the Proton acceptor of the active site. Mg(2+) contacts are provided by aspartate 13 and glycine 40. Residues 13–16 (DEGK), 38–41 (NAGH), threonine 128, arginine 142, glutamine 223, threonine 238, and arginine 302 each bind IMP. The active-site Proton donor is the histidine 41. 298–304 (TTTGRPR) is a substrate binding site. Residues arginine 304, 330–332 (SID), and 412–414 (SVG) contribute to the GTP site.

The protein belongs to the adenylosuccinate synthetase family. As to quaternary structure, homodimer. It depends on Mg(2+) as a cofactor.

The protein resides in the cytoplasm. It carries out the reaction IMP + L-aspartate + GTP = N(6)-(1,2-dicarboxyethyl)-AMP + GDP + phosphate + 2 H(+). Its pathway is purine metabolism; AMP biosynthesis via de novo pathway; AMP from IMP: step 1/2. Plays an important role in the de novo pathway of purine nucleotide biosynthesis. Catalyzes the first committed step in the biosynthesis of AMP from IMP. The chain is Adenylosuccinate synthetase from Streptococcus pyogenes serotype M3 (strain ATCC BAA-595 / MGAS315).